A 1222-amino-acid polypeptide reads, in one-letter code: Serine/threonine-protein kinase WNK4 (1222 aa).

Residues 1–17 are compositionally biased toward polar residues; sequence MLAPRNTETGVPMSQTE. The interval 1 to 165 is disordered; that stretch reads MLAPRNTETG…DTETQAVATS (165 aa). Residues 90-101 show a composition bias toward low complexity; it reads AGPTRSPPSSSK. Ser-95 is subject to Phosphoserine. The span at 135–152 shows a compositional bias: basic and acidic residues; the sequence is EPPRVPDAAARERRREQE. Residues Lys-154 and Lys-172 each participate in a glycyl lysine isopeptide (Lys-Gly) (interchain with G-Cter in ubiquitin) cross-link. One can recognise a Protein kinase domain in the interval 171–429; sequence LKFDIEIGRG…IQDLLAHAFF (259 aa). Ser-181 contacts ATP. Residues Lys-183, Lys-223, and Lys-238 each participate in a glycyl lysine isopeptide (Lys-Gly) (interchain with G-Cter in ubiquitin) cross-link. ATP-binding positions include 251-254 and Lys-301; that span reads TELM. Asp-318 (proton acceptor) is an active-site residue. Residue Lys-325 forms a Glycyl lysine isopeptide (Lys-Gly) (interchain with G-Cter in ubiquitin) linkage. Ser-328 and Ser-332 each carry phosphoserine; by autocatalysis. Glycyl lysine isopeptide (Lys-Gly) (interchain with G-Cter in ubiquitin) cross-links involve residues Lys-384, Lys-390, Lys-447, and Lys-451. Residues 525-562 are disordered; sequence RELEVLPPDSGPPPATVSLAPGPPSAFPPEPEEPEADQ. The span at 533–553 shows a compositional bias: pro residues; sequence DSGPPPATVSLAPGPPSAFPP. Residues 554–564 are interaction with KLHL3; the sequence is EPEEPEADQHQ. Ser-572 is subject to Phosphoserine. Disordered regions lie at residues 626 to 659, 747 to 809, 877 to 896, and 927 to 976; these read RSGP…MRKN, DAGP…GAPF, SYPQ…SPPS, and SPGL…AQPL. Composition is skewed to low complexity over residues 627–638, 757–769, 793–807, and 877–890; these read SGPGSDFSPGDS, ALSP…ALPA, STSP…SPGA, and SYPQ…SLPV. Over residues 935–944 the composition is skewed to pro residues; sequence PPAPPGPLPS. Over residues 953–963 the composition is skewed to polar residues; sequence DQESLSAQTAE. Residue Lys-990 forms a Glycyl lysine isopeptide (Lys-Gly) (interchain with G-Cter in ubiquitin) linkage. An RFXV motif motif is present at residues 996–999; it reads RFQV. The tract at residues 1000–1087 is disordered; the sequence is TSSKEPAEPP…SSPILSHPSP (88 aa). Residue Ser-1014 is modified to Phosphoserine. The segment covering 1014 to 1032 has biased composition (low complexity); it reads SPTLSRSLKLPSPPLTSES. Over residues 1044–1056 the composition is skewed to basic and acidic residues; sequence ETREALAESDRAA. Glycyl lysine isopeptide (Lys-Gly) (interchain with G-Cter in ubiquitin) cross-links involve residues Lys-1123, Lys-1136, and Lys-1137. The segment at 1166–1222 is disordered; the sequence is RRLSKGSFPTSRRNSLQRSDLPGPGIMRRNSLSGSSTGSQEQRASKGVTFAGDIGRM. Polar residues-rich tracts occupy residues 1172-1183 and 1195-1207; these read SFPTSRRNSLQR and NSLS…SQEQ. Ser-1196 is modified (phosphoserine).

The protein belongs to the protein kinase superfamily. Ser/Thr protein kinase family. WNK subfamily. As to quaternary structure, interacts with the C-terminal region of KCNJ1. Interacts with WNK1 and WNK3. Interacts with KLHL3. The cofactor is Mg(2+). Post-translationally, autophosphorylated at Ser-328 and Ser-332, promoting its activation. Phosphorylated by WNK1 and WNK3. Phosphorylated at Ser-572 in a MAP3K15/ASK3-dependent process in response to osmotic stress or hypotonic low-chloride stimulation. In terms of processing, ubiquitinated by the BCR(KLHL3) complex, leading to its degradation. Also ubiquitinated by the BCR(KLHL2) complex. Locates to the distal convoluted tubule, the medullary collecting duct and the cortical collecting duct of the kidney. Expressed in pancreatic duct.

It is found in the cell junction. It localises to the tight junction. It carries out the reaction L-seryl-[protein] + ATP = O-phospho-L-seryl-[protein] + ADP + H(+). It catalyses the reaction L-threonyl-[protein] + ATP = O-phospho-L-threonyl-[protein] + ADP + H(+). With respect to regulation, activation requires autophosphorylation of Ser-328 and Ser-332. Autophosphorylation and subsequent activation is inhibited by increases in intracellular ionic strength: Cl(-) potently inhibits WNK4 kinase activity via direct binding. Also inhibited by K(+) ions. Its function is as follows. Serine/threonine-protein kinase component of the WNK4-SPAK/OSR1 kinase cascade, which acts as a key regulator of ion transport in the distal nephron and blood pressure. The WNK4-SPAK/OSR1 kinase cascade is composed of WNK4, which mediates phosphorylation and activation of downstream kinases OXSR1/OSR1 and STK39/SPAK. Following activation, OXSR1/OSR1 and STK39/SPAK catalyze phosphorylation of ion cotransporters, such as SLC12A1/NKCC2, SLC12A2/NKCC1, SLC12A3/NCC, SLC12A5/KCC2 or SLC12A6/KCC3, regulating their activity. Acts as a molecular switch that regulates the balance between renal salt reabsorption and K(+) secretion by modulating the activities of renal transporters and channels, including the Na-Cl cotransporter SLC12A3/NCC and the K(+) channel, KCNJ1/ROMK. Regulates NaCl reabsorption in the distal nephron by activating the thiazide-sensitive Na-Cl cotransporter SLC12A3/NCC in distal convoluted tubule cells of kidney: activates SLC12A3/NCC in a OXSR1/OSR1- and STK39/SPAK-dependent process. Also acts as a scaffold protein independently of its protein kinase activity: negatively regulates cell membrane localization of various transporters and channels (CFTR, KCNJ1/ROMK, SLC4A4, SLC26A9 and TRPV4) by clathrin-dependent endocytosis. Also inhibits the activity of the epithelial Na(+) channel (ENaC) SCNN1A, SCNN1B, SCNN1D in a inase-independent mechanism. May also phosphorylate NEDD4L. This chain is Serine/threonine-protein kinase WNK4, found in Mus musculus (Mouse).